A 173-amino-acid polypeptide reads, in one-letter code: Shikimate kinase 1 (173 aa).

14 to 19 (GAGKST) serves as a coordination point for ATP. Ser18 provides a ligand contact to Mg(2+). Substrate is bound by residues Asp36, Arg60, and Gly82. ATP is bound at residue Arg120. Arg140 is a substrate binding site. Gln157 serves as a coordination point for ATP.

It belongs to the shikimate kinase family. As to quaternary structure, monomer. Requires Mg(2+) as cofactor.

The protein resides in the cytoplasm. The catalysed reaction is shikimate + ATP = 3-phosphoshikimate + ADP + H(+). It participates in metabolic intermediate biosynthesis; chorismate biosynthesis; chorismate from D-erythrose 4-phosphate and phosphoenolpyruvate: step 5/7. Functionally, catalyzes the specific phosphorylation of the 3-hydroxyl group of shikimic acid using ATP as a cosubstrate. The sequence is that of Shikimate kinase 1 from Enterobacter sp. (strain 638).